We begin with the raw amino-acid sequence, 1235 residues long: ATP-dependent helicase/nuclease subunit A (1235 aa).

The UvrD-like helicase ATP-binding domain occupies 4-470; it reads REYTLSQKQA…IILAENFRSM (467 aa). 25-32 is an ATP binding site; the sequence is ASAGSGKT. Residues 501 to 795 enclose the UvrD-like helicase C-terminal domain; the sequence is QFGAKYYPDE…KLMTIHGSKG (295 aa).

It belongs to the helicase family. AddA subfamily. Heterodimer of AddA and AddB/RexB. The cofactor is Mg(2+).

The catalysed reaction is Couples ATP hydrolysis with the unwinding of duplex DNA by translocating in the 3'-5' direction.. It carries out the reaction ATP + H2O = ADP + phosphate + H(+). Its function is as follows. The heterodimer acts as both an ATP-dependent DNA helicase and an ATP-dependent, dual-direction single-stranded exonuclease. Recognizes the chi site generating a DNA molecule suitable for the initiation of homologous recombination. The AddA nuclease domain is required for chi fragment generation; this subunit has the helicase and 3' -&gt; 5' nuclease activities. The polypeptide is ATP-dependent helicase/nuclease subunit A (Pediococcus pentosaceus (strain ATCC 25745 / CCUG 21536 / LMG 10740 / 183-1w)).